We begin with the raw amino-acid sequence, 434 residues long: Septin-7 (434 aa).

Position 27 is a phosphotyrosine (Tyr-27). One can recognise a Septin-type G domain in the interval 44–313 (RGFEFTLMVV…ENYRSRKLAA (270 aa)). The interval 44-314 (RGFEFTLMVV…NYRSRKLAAV (271 aa)) is interaction with SEPTIN12. A G1 motif region spans residues 54-61 (GESGLGKS). 54-61 (GESGLGKS) contributes to the GTP binding site. At Ser-74 the chain carries Phosphoserine. GTP contacts are provided by residues Thr-87, Gly-113, and 192 to 200 (KADTLTPEE). Residues 110–113 (DTPG) form a G3 motif region. The tract at residues 191–194 (AKAD) is G4 motif. Thr-225 is modified (phosphothreonine). GTP contacts are provided by Gly-247 and Arg-262. A coiled-coil region spans residues 329–434 (TKSPLAQMEE…EKNKKKGKIF (106 aa)). Ser-331 is subject to Phosphoserine. Lys-370 bears the N6-acetyllysine mark. Basic and acidic residues predominate over residues 377–407 (QRRHEQMKKNLEAQHKGLEEKRRQFEDEKAN). Residues 377–434 (QRRHEQMKKNLEAQHKGLEEKRRQFEDEKANWEAQQRILEQQNSSRTLEKNKKKGKIF) are disordered. Residue Ser-421 is modified to Phosphoserine. Phosphothreonine is present on Thr-423.

Belongs to the TRAFAC class TrmE-Era-EngA-EngB-Septin-like GTPase superfamily. Septin GTPase family. As to quaternary structure, septins polymerize into heterooligomeric protein complexes that form filaments, and associate with cellular membranes, actin filaments and microtubules. GTPase activity is required for filament formation. Filaments are assembled from asymmetrical heterotrimers, composed of SEPTIN2, SEPTIN6 and SEPTIN7 that associate head-to-head to form a hexameric unit. Within the trimer, directly interacts with SEPTIN6, while interaction with SEPTIN2 seems indirect. In the absence of SEPTIN6, forms homodimers. Interacts directly with CENPE and links CENPE to septin filaments composed of SEPTIN2, SEPTIN6 and SEPTIN7. Interacts with SEPTIN5, SEPTIN8, SEPTIN9 and SEPTIN11. Component of a septin core octameric complex consisting of SEPTIN12, SEPTIN7, SEPTIN6 and SEPTIN2 or SEPTIN4 in the order 12-7-6-2-2-6-7-12 or 12-7-6-4-4-6-7-12 and located in the sperm annulus; the SEPTIN12:SEPTIN7 association is mediated by the respective GTP-binding domains.

Its subcellular location is the cytoplasm. It is found in the chromosome. The protein localises to the centromere. The protein resides in the kinetochore. It localises to the cytoskeleton. Its subcellular location is the spindle. It is found in the cleavage furrow. The protein localises to the midbody. The protein resides in the cilium axoneme. It localises to the cell projection. Its subcellular location is the cilium. It is found in the flagellum. Functionally, filament-forming cytoskeletal GTPase. Required for normal organization of the actin cytoskeleton. Required for normal progress through mitosis. Involved in cytokinesis. Required for normal association of CENPE with the kinetochore. Plays a role in ciliogenesis and collective cell movements. Forms a filamentous structure with SEPTIN12, SEPTIN6, SEPTIN2 and probably SEPTIN4 at the sperm annulus which is required for the structural integrity and motility of the sperm tail during postmeiotic differentiation. The protein is Septin-7 of Pan troglodytes (Chimpanzee).